A 303-amino-acid chain; its full sequence is Protoheme IX farnesyltransferase (303 aa).

8 helical membrane passes run 25–45 (MGLV…AIVL), 54–74 (IPQI…ACAL), 104–124 (LLIL…ILNI), 125–145 (PSGV…SIWS), 151–171 (WNTV…WTAI), 179–199 (AIAL…ALAI), 228–248 (VWLI…PVFI), and 280–300 (FVYS…ISLI).

The protein belongs to the UbiA prenyltransferase family. Protoheme IX farnesyltransferase subfamily. As to quaternary structure, interacts with CtaA.

It is found in the cell membrane. The catalysed reaction is heme b + (2E,6E)-farnesyl diphosphate + H2O = Fe(II)-heme o + diphosphate. Its pathway is porphyrin-containing compound metabolism; heme O biosynthesis; heme O from protoheme: step 1/1. Converts heme B (protoheme IX) to heme O by substitution of the vinyl group on carbon 2 of heme B porphyrin ring with a hydroxyethyl farnesyl side group. This is Protoheme IX farnesyltransferase from Staphylococcus carnosus (strain TM300).